We begin with the raw amino-acid sequence, 243 residues long: GTP cyclohydrolase 1 (243 aa).

Residue threonine 15 is modified to Phosphothreonine. Residues 18 to 55 (NIRPTSPYTLNPPVERDGFSWPSVGTRQRAEETEEEEK) form a disordered region. Phosphoserine is present on serine 23. Zn(2+)-binding residues include cysteine 132, histidine 135, and cysteine 203.

The protein belongs to the GTP cyclohydrolase I family. Homodimer.

The catalysed reaction is GTP + H2O = 7,8-dihydroneopterin 3'-triphosphate + formate + H(+). Its pathway is cofactor biosynthesis; 7,8-dihydroneopterin triphosphate biosynthesis; 7,8-dihydroneopterin triphosphate from GTP: step 1/1. GTP cyclohydrolase 1 is the first enzyme in the biosynthetic pathway leading to folic acid. The sequence is that of GTP cyclohydrolase 1 from Saccharomyces cerevisiae (strain ATCC 204508 / S288c) (Baker's yeast).